The following is a 286-amino-acid chain: MASLNEIKKRIKIIESTSKITNAMKLVSSAKLKKQKELFLNESIYYKKFYDLFTYIKSNSDSEILSLKKSEEGKTIWLAFFSSMGLCGSFNLNIVKELQKHIKSNDEIWLIGKKGKNLIKSKGIEAEISLDLELDDKDINFDLFHIIAENLLAKYKNDYNIKSIKVIYSKFVNSLSFTPSVFSLLPLDKAIEKPRLDKPNNGADFSIQPNANDVFESILIDYLATCIHGAIVESKVCENASRRNAMDSATKNANELIKNYKLEFNRKRQSEITQEITEIVSGAKGE.

It belongs to the ATPase gamma chain family. F-type ATPases have 2 components, CF(1) - the catalytic core - and CF(0) - the membrane proton channel. CF(1) has five subunits: alpha(3), beta(3), gamma(1), delta(1), epsilon(1). CF(0) has three main subunits: a, b and c.

It is found in the cell membrane. Produces ATP from ADP in the presence of a proton gradient across the membrane. The gamma chain is believed to be important in regulating ATPase activity and the flow of protons through the CF(0) complex. This Malacoplasma penetrans (strain HF-2) (Mycoplasma penetrans) protein is ATP synthase gamma chain.